The chain runs to 347 residues: Quinolinate synthase (347 aa).

Iminosuccinate-binding residues include H47 and S68. [4Fe-4S] cluster is bound at residue C113. Iminosuccinate contacts are provided by residues Y139–N141 and S156. C200 is a binding site for [4Fe-4S] cluster. Iminosuccinate-binding positions include H226 to E228 and T243. C297 contributes to the [4Fe-4S] cluster binding site.

It belongs to the quinolinate synthase family. Type 1 subfamily. [4Fe-4S] cluster is required as a cofactor.

The protein resides in the cytoplasm. The catalysed reaction is iminosuccinate + dihydroxyacetone phosphate = quinolinate + phosphate + 2 H2O + H(+). It functions in the pathway cofactor biosynthesis; NAD(+) biosynthesis; quinolinate from iminoaspartate: step 1/1. Catalyzes the condensation of iminoaspartate with dihydroxyacetone phosphate to form quinolinate. This chain is Quinolinate synthase, found in Shigella dysenteriae serotype 1 (strain Sd197).